Consider the following 874-residue polypeptide: Rho GTPase-activating protein 42 (874 aa).

A BAR domain is found at 7 to 262 (EFSDSYLDSP…MKSANQDYRP (256 aa)). A coiled-coil region spans residues 225–261 (KQQLQFNLQNTRNNFESTRQEVERLMQRMKSANQDYR). Positions 265 to 374 (QWTMEGYLYV…WLEAMDGKEP (110 aa)) constitute a PH domain. A Phosphotyrosine modification is found at Tyr376. Residues 376 to 572 (YTLPAIISKK…ILIEHYEKIF (197 aa)) form the Rho-GAP domain. The disordered stretch occupies residues 575-720 (APDPSIPLPQ…GDVSPPIDLV (146 aa)). Residues 620–650 (DSYSSSPDSTPMGSIESLSSHSSEQNSTTKS) show a composition bias toward low complexity. The segment covering 667–686 (TPSSSNGQKSLGLWTTSPES) has biased composition (polar residues). Residue Ser683 is modified to Phosphoserine. Residues 687 to 697 (SSREDATKTDA) are compositionally biased toward basic and acidic residues. Positions 700 to 711 (DCQSVASVTSPG) are enriched in polar residues. Phosphoserine is present on residues Ser740, Ser753, Ser756, and Ser811. A compositionally biased stretch (polar residues) spans 749–762 (SYSGSIQSLTSVGS). The disordered stretch occupies residues 749-777 (SYSGSIQSLTSVGSKETPKASPNPDLPPK). Positions 816–874 (SSGRQAKAMYSCKAEHSHELSFPQGAIFSNVYPSVEPGWLKATYEGKTGLVPENYVVFL) constitute an SH3 domain. Tyr870 bears the Phosphotyrosine mark.

In terms of tissue distribution, highly and selectively expressed in smooth muscle cells.

In terms of biological role, may influence blood pressure by functioning as a GTPase-activating protein for RHOA in vascular smooth muscle. This Homo sapiens (Human) protein is Rho GTPase-activating protein 42.